A 930-amino-acid polypeptide reads, in one-letter code: Isoleucine--tRNA ligase (930 aa).

The 'HIGH' region motif lies at 57–67; the sequence is PYANGNIHVGH. L-isoleucyl-5'-AMP is bound at residue glutamate 554. Residues 595–599 carry the 'KMSKS' region motif; that stretch reads KMSKS. Residue lysine 598 coordinates ATP. Zn(2+) is bound by residues cysteine 888, cysteine 891, cysteine 908, and cysteine 911.

This sequence belongs to the class-I aminoacyl-tRNA synthetase family. IleS type 1 subfamily. In terms of assembly, monomer. It depends on Zn(2+) as a cofactor.

The protein localises to the cytoplasm. The catalysed reaction is tRNA(Ile) + L-isoleucine + ATP = L-isoleucyl-tRNA(Ile) + AMP + diphosphate. Functionally, catalyzes the attachment of isoleucine to tRNA(Ile). As IleRS can inadvertently accommodate and process structurally similar amino acids such as valine, to avoid such errors it has two additional distinct tRNA(Ile)-dependent editing activities. One activity is designated as 'pretransfer' editing and involves the hydrolysis of activated Val-AMP. The other activity is designated 'posttransfer' editing and involves deacylation of mischarged Val-tRNA(Ile). This chain is Isoleucine--tRNA ligase, found in Streptococcus pneumoniae (strain CGSP14).